The following is a 171-amino-acid chain: Signal peptidase complex catalytic subunit SEC11 (171 aa).

Over 1 to 6 the chain is Cytoplasmic; sequence MNIRQQ. The chain crosses the membrane as a helical; Signal-anchor for type II membrane protein span at residues 7–24; the sequence is LVQLLNLAMVLSTAFMFW. At 25-171 the chain is on the lumenal side; the sequence is KGLGLVTNSN…MALSTLLTRE (147 aa). Catalysis depends on charge relay system residues S44, H83, and D113. The interval 157-168 is C-terminal short (CTS) helix; it reads GLLGLMALSTLL.

Belongs to the peptidase S26B family. In terms of assembly, component of the signal peptidase complex (SPC) composed of a catalytic subunit SEC11 and three accessory subunits SPC1, SPC2 and SPC3. The complex induces a local thinning of the ER membrane which is used to measure the length of the signal peptide (SP) h-region of protein substrates. This ensures the selectivity of the complex towards h-regions shorter than 18-20 amino acids. SPC associates with the translocon complex.

It is found in the endoplasmic reticulum membrane. It carries out the reaction Cleavage of hydrophobic, N-terminal signal or leader sequences from secreted and periplasmic proteins.. Functionally, catalytic component of the signal peptidase complex (SPC) which catalyzes the cleavage of N-terminal signal sequences from nascent proteins as they are translocated into the lumen of the endoplasmic reticulum. Specifically cleaves N-terminal signal peptides that contain a hydrophobic alpha-helix (h-region) shorter than 18-20 amino acids. The sequence is that of Signal peptidase complex catalytic subunit SEC11 (SEC11) from Komagataella phaffii (strain GS115 / ATCC 20864) (Yeast).